Here is a 710-residue protein sequence, read N- to C-terminus: Solute carrier organic anion transporter family member 3A1 (710 aa).

N-acetylmethionine is present on methionine 1. A compositionally biased stretch (gly residues) spans 1-15 (MQGKKPGGSSGGGRS). Residues 1 to 25 (MQGKKPGGSSGGGRSGELQGDEAQR) form a disordered region. Over 1–40 (MQGKKPGGSSGGGRSGELQGDEAQRNKKKKKKVSCFSNIK) the chain is Cytoplasmic. Residues 41 to 60 (IFLVSECALMLAQGTVGAYL) form a helical membrane-spanning segment. The Extracellular segment spans residues 61 to 79 (VSVLTTLERRFNLQSADVG). A helical transmembrane segment spans residues 80-100 (VIASSFEIGNLALILFVSYFG). The Cytoplasmic segment spans residues 101 to 106 (ARGHRP). A helical membrane pass occupies residues 107 to 131 (RLIGCGGIVMALGALLSALPEFLTH). Over 132-174 (QYKYEAGEIRWGAEGRDVCATNGSSSDEGPDPDLICRNRTATN) the chain is Extracellular. N-linked (GlcNAc...) asparagine glycans are attached at residues asparagine 153 and asparagine 169. The chain crosses the membrane as a helical span at residues 175–203 (MMYLLLIGAQVLLGIGATPVQPLGVSYID). Topologically, residues 204-222 (DHVRRKDSSLYIGILFTML) are cytoplasmic. The chain crosses the membrane as a helical span at residues 223-243 (VFGPACGFILGSFCTKIYVDA). Residues 244-261 (VFIDTSNLDITPDDPRWI) lie on the Extracellular side of the membrane. Residues 262–286 (GAWWGGFLLCGALLFFSSLLMFGFP) form a helical membrane-spanning segment. Residues 287–344 (QSLPPHSDPGMESEQAMLPEREYERPKPSNGVLRHPLEPDSSASCFQQLRVIPKVTKH) are Cytoplasmic-facing. The helical transmembrane segment at 345–366 (LLSNPVFTCIVLAACMEIAVVA) threads the bilayer. Residues 367–386 (GFAAFLGKYLEQQFNLTTSS) are Extracellular-facing. Residue asparagine 381 is glycosylated (N-linked (GlcNAc...) asparagine). Residues 387-410 (ANQLLGMTAIPCACLGIFLGGLLV) traverse the membrane as a helical segment. Topologically, residues 411-414 (KKLS) are cytoplasmic. The chain crosses the membrane as a helical span at residues 415-438 (LSALGAIRMAMLVNLVSTACYVSF). Topologically, residues 439-539 (LFLGCDTGPV…PGCQEAFLTF (101 aa)) are extracellular. The N-linked (GlcNAc...) asparagine glycan is linked to asparagine 457. One can recognise a Kazal-like domain in the interval 465-513 (LDPYSPCNNNCECQTDSFTPVCGADGITYLSACFAGCNSTNLTGCACLT). Cystine bridges form between cysteine 471–cysteine 497, cysteine 475–cysteine 486, and cysteine 477–cysteine 501. Asparagine 502, asparagine 505, and asparagine 519 each carry an N-linked (GlcNAc...) asparagine glycan. The chain crosses the membrane as a helical span at residues 540 to 562 (LCVMCVCSLIGAMAQTPSVIILI). Topologically, residues 563–571 (RTVSPELKS) are cytoplasmic. Residues 572–597 (YALGVLFLLLRLLGFIPPPLIFGAGI) form a helical membrane-spanning segment. The Extracellular segment spans residues 598-630 (DSTCLFWSTFCGEQGACVLYDNVVYRYLYVSIA). A helical transmembrane segment spans residues 631–648 (IALKSFAFILYTTTWQCL). Residues 649–705 (RKNYKRYIKNHEGGLSTSEFFASTLTLDNLGRDPVPAHQTHRTKFIYNLEDHEWCEN) are Cytoplasmic-facing.

It belongs to the organo anion transporter (TC 2.A.60) family. Widely expressed.

The protein localises to the basolateral cell membrane. The protein resides in the apical cell membrane. Its subcellular location is the basal cell membrane. The catalysed reaction is L-thyroxine(out) = L-thyroxine(in). It catalyses the reaction prostaglandin E1(out) = prostaglandin E1(in). It carries out the reaction prostaglandin E2(out) = prostaglandin E2(in). The enzyme catalyses prostaglandin F2alpha(out) = prostaglandin F2alpha(in). The catalysed reaction is (5Z,8Z,11Z,14Z)-eicosatetraenoate(out) = (5Z,8Z,11Z,14Z)-eicosatetraenoate(in). It catalyses the reaction taurocholate(out) = taurocholate(in). It carries out the reaction glycocholate(out) = glycocholate(in). The enzyme catalyses estrone 3-sulfate(out) = estrone 3-sulfate(in). The catalysed reaction is argipressin(out) = argipressin(in). Its function is as follows. Putative organic anion antiporter with apparent broad substrate specificity. Recognizes various substrates including thyroid hormone L-thyroxine, prostanoids such as prostaglandin E1 and E2, bile acids such as taurocholate, glycolate and glycochenodeoxycholate and peptide hormones such as L-arginine vasopressin, likely operating in a tissue-specific manner. The transport mechanism, its electrogenicity and potential tissue-specific counterions remain to be elucidated. The chain is Solute carrier organic anion transporter family member 3A1 (Slco3a1) from Mus musculus (Mouse).